A 163-amino-acid chain; its full sequence is Probable chemoreceptor glutamine deamidase CheD (163 aa).

Belongs to the CheD family.

The enzyme catalyses L-glutaminyl-[protein] + H2O = L-glutamyl-[protein] + NH4(+). Its function is as follows. Probably deamidates glutamine residues to glutamate on methyl-accepting chemotaxis receptors (MCPs), playing an important role in chemotaxis. The sequence is that of Probable chemoreceptor glutamine deamidase CheD from Pyrococcus abyssi (strain GE5 / Orsay).